Consider the following 140-residue polypeptide: C-type lectin 6 (140 aa).

Positions 1–23 are cleaved as a signal peptide; that stretch reads MGRLVFVSFGLLVVFLSLSGTGA. Intrachain disulfides connect Cys-25–Cys-36, Cys-53–Cys-138, and Cys-115–Cys-130. Residues 32-139 form the C-type lectin domain; sequence YEGHCYRVFQ…CSKTHNVICK (108 aa).

Belongs to the snaclec family. As to quaternary structure, heteromultimer; disulfide-linked. As to expression, expressed by the venom gland.

It is found in the secreted. In terms of biological role, interferes with one step of hemostasis (modulation of platelet aggregation, or coagulation cascade, for example). The polypeptide is C-type lectin 6 (Crotalus adamanteus (Eastern diamondback rattlesnake)).